A 177-amino-acid polypeptide reads, in one-letter code: Bifunctional protein PyrR (177 aa).

A PRPP-binding motif is present at residues 99–111; it reads VILIDDVLYTGRT.

Belongs to the purine/pyrimidine phosphoribosyltransferase family. PyrR subfamily. In terms of assembly, homodimer and homohexamer; in equilibrium.

The catalysed reaction is UMP + diphosphate = 5-phospho-alpha-D-ribose 1-diphosphate + uracil. Functionally, regulates transcriptional attenuation of the pyrimidine nucleotide (pyr) operon by binding in a uridine-dependent manner to specific sites on pyr mRNA. This disrupts an antiterminator hairpin in the RNA and favors formation of a downstream transcription terminator, leading to a reduced expression of downstream genes. In terms of biological role, also displays a weak uracil phosphoribosyltransferase activity which is not physiologically significant. The polypeptide is Bifunctional protein PyrR (Pediococcus pentosaceus (strain ATCC 25745 / CCUG 21536 / LMG 10740 / 183-1w)).